Reading from the N-terminus, the 1273-residue chain is Kinesin-like protein KIN-14A (1273 aa).

A disordered region spans residues 1-52 (MADQRSKTNRWNWEVSGFEPRKSSSNASFAESTGHRTTGPLLRRNSISTPSL). The stretch at 59–89 (ASKVNGLKEKVKLAKEDYLELRQEATDLQEY) forms a coiled coil. The region spanning 142–456 (NIKVFCRARP…LNYAARARNT (315 aa)) is the Kinesin motor domain. An ATP-binding site is contributed by 223–230 (GQTNAGKT). Coiled coils occupy residues 466 to 511 (IKKW…CVLL), 559 to 595 (QLDQEQKLQMQQQDSAIQNLQAKITDLESQVSEAVRS), and 627 to 657 (TKKLEEELKKRDALIERLHEENEKLFDRLTE). Disordered stretches follow at residues 827–847 (KPNTGRSKSTSRGSSPGRSPV) and 1136–1157 (QEDTNILEQSHDRRPSLESISS). The span at 830–846 (TGRSKSTSRGSSPGRSP) shows a compositional bias: low complexity.

It belongs to the TRAFAC class myosin-kinesin ATPase superfamily. Kinesin family. KIN-14 subfamily. In terms of assembly, homodimer and heterodimer with KCA2. Interacts with CDKA-1. Interacts with AL1, a geminivirus (TGMV) protein essential for viral replication. Interacts with LUE1/KSS. Post-translationally, part of the phosphorylation is not CDK-dependent. In terms of tissue distribution, widely expressed.

Its subcellular location is the nucleus. The protein localises to the cytoplasm. The protein resides in the cytoskeleton. It is found in the spindle. It localises to the chromosome. Its subcellular location is the cell membrane. The protein localises to the phragmoplast. Kinesin-like protein required for chloroplast movements and anchor to the plasma membrane. Mediates chloroplast movement via chloroplast actin (cp-actin) filaments. Required for the chloroplast avoidance response under high intensity blue light. Mediates redundantly with CHUP1 the nuclear avoidance response under high intensity blue light. May act as a mitotic kinesin. Probably involved in division plane determination. This chain is Kinesin-like protein KIN-14A, found in Arabidopsis thaliana (Mouse-ear cress).